A 290-amino-acid polypeptide reads, in one-letter code: Diaminopimelate epimerase (290 aa).

Substrate contacts are provided by Asn17, Gln49, and Asn69. The active-site Proton donor is the Cys78. Residues 79–80 (GN), Asn165, Asn198, and 216–217 (ER) contribute to the substrate site. Residue Cys225 is the Proton acceptor of the active site. 226 to 227 (GS) contacts substrate.

It belongs to the diaminopimelate epimerase family. In terms of assembly, homodimer.

The protein resides in the cytoplasm. The catalysed reaction is (2S,6S)-2,6-diaminopimelate = meso-2,6-diaminopimelate. The protein operates within amino-acid biosynthesis; L-lysine biosynthesis via DAP pathway; DL-2,6-diaminopimelate from LL-2,6-diaminopimelate: step 1/1. In terms of biological role, catalyzes the stereoinversion of LL-2,6-diaminopimelate (L,L-DAP) to meso-diaminopimelate (meso-DAP), a precursor of L-lysine and an essential component of the bacterial peptidoglycan. This chain is Diaminopimelate epimerase, found in Methylocella silvestris (strain DSM 15510 / CIP 108128 / LMG 27833 / NCIMB 13906 / BL2).